A 333-amino-acid chain; its full sequence is SPbeta prophage-derived recombinase-like protein YomM (333 aa).

Residues 30-113 (EEHRNLVQEF…GVSSLNNYIE (84 aa)) form the Core-binding (CB) domain. Residues 142–332 (YEKVKVTYDD…DFEEEKNQIF (191 aa)) form the Tyr recombinase domain. Catalysis depends on residues R180, K211, H281, and H308. The active-site O-(3'-phospho-DNA)-tyrosine intermediate is Y319.

This sequence belongs to the 'phage' integrase family.

The chain is SPbeta prophage-derived recombinase-like protein YomM (yomM) from Bacillus subtilis (strain 168).